The primary structure comprises 124 residues: Large ribosomal subunit protein uL18 (124 aa).

This sequence belongs to the universal ribosomal protein uL18 family. In terms of assembly, part of the 50S ribosomal subunit; part of the 5S rRNA/L5/L18/L25 subcomplex. Contacts the 5S and 23S rRNAs.

Functionally, this is one of the proteins that bind and probably mediate the attachment of the 5S RNA into the large ribosomal subunit, where it forms part of the central protuberance. The protein is Large ribosomal subunit protein uL18 of Orientia tsutsugamushi (strain Ikeda) (Rickettsia tsutsugamushi).